Here is a 383-residue protein sequence, read N- to C-terminus: tRNA-specific 2-thiouridylase MnmA (383 aa).

ATP is bound by residues glycine 9–serine 16 and methionine 35. Positions asparagine 95–aspartate 97 are interaction with target base in tRNA. The active-site Nucleophile is the cysteine 100. A disulfide bridge links cysteine 100 with cysteine 196. ATP is bound at residue glycine 124. Positions lysine 146–glutamine 148 are interaction with tRNA. Catalysis depends on cysteine 196, which acts as the Cysteine persulfide intermediate. The tract at residues arginine 308–tyrosine 309 is interaction with tRNA.

This sequence belongs to the MnmA/TRMU family.

It localises to the cytoplasm. The enzyme catalyses S-sulfanyl-L-cysteinyl-[protein] + uridine(34) in tRNA + AH2 + ATP = 2-thiouridine(34) in tRNA + L-cysteinyl-[protein] + A + AMP + diphosphate + H(+). Its function is as follows. Catalyzes the 2-thiolation of uridine at the wobble position (U34) of tRNA, leading to the formation of s(2)U34. This chain is tRNA-specific 2-thiouridylase MnmA, found in Burkholderia pseudomallei (strain 1106a).